Consider the following 344-residue polypeptide: UPF0283 membrane protein YcjF (344 aa).

3 consecutive transmembrane segments (helical) span residues 70 to 90 (MVMG…VQWT), 100 to 120 (VALG…GSVV), and 213 to 233 (ESTL…FIAW).

This sequence belongs to the UPF0283 family.

Its subcellular location is the cell inner membrane. The polypeptide is UPF0283 membrane protein YcjF (Shigella dysenteriae serotype 1 (strain Sd197)).